Consider the following 612-residue polypeptide: 1,8-cineole synthase, chloroplastic (612 aa).

A chloroplast-targeting transit peptide spans 1–52 (MALVSVAPLASRSCLSKSLISSTHELKPLRRTILPTLRWKSATPSINMCLTT). Residues Asp-363, Asp-367, and Asp-515 each contribute to the Mg(2+) site. The DDXXD motif motif lies at 363–367 (DDIYD).

It belongs to the terpene synthase family. Tpsd subfamily. It depends on Mg(2+) as a cofactor. Mn(2+) is required as a cofactor.

It localises to the plastid. The protein localises to the chloroplast. It carries out the reaction (2E)-geranyl diphosphate + H2O = 1,8-cineole + diphosphate. The protein operates within terpene metabolism; oleoresin biosynthesis. Functionally, terpene synthase (TPS) involved in the biosynthesis of monoterpene natural products included in conifer oleoresin secretions and volatile emissions; these compounds contribute to biotic and abiotic stress defense against herbivores and pathogens. Catalyzes the conversion of (2E)-geranyl diphosphate (GPP) to 1,8-cineole. The polypeptide is 1,8-cineole synthase, chloroplastic (Picea sitchensis (Sitka spruce)).